The primary structure comprises 141 residues: MQLTSFTDYGLRALIYMASLPPDKMTSISEVTEVYGVSRNHMVKIINQLSRVGFVTAVRGKNGGIRLGKPAETIRLGDVVRALEPLSLVNCNSTFCHITPACRLKQVLQQGVQNFLEELDSHTLADMVEDNPSLYKLLLVE.

The HTH rrf2-type domain maps to 2 to 129 (QLTSFTDYGL…DSHTLADMVE (128 aa)). The H-T-H motif DNA-binding region spans 28-51 (ISEVTEVYGVSRNHMVKIINQLSR). [2Fe-2S] cluster is bound by residues Cys-91, Cys-96, and Cys-102.

[2Fe-2S] cluster serves as cofactor.

In terms of biological role, nitric oxide-sensitive repressor of genes involved in protecting the cell against nitrosative stress. May require iron for activity. In Serratia proteamaculans (strain 568), this protein is HTH-type transcriptional repressor NsrR.